A 224-amino-acid polypeptide reads, in one-letter code: Small ribosomal subunit protein uS3c (224 aa).

In terms of domain architecture, KH type-2 spans 43 to 124 (IKNYIQKNRK…RLNIAIEKVK (82 aa)).

This sequence belongs to the universal ribosomal protein uS3 family. In terms of assembly, part of the 30S ribosomal subunit.

It localises to the plastid. Its subcellular location is the chloroplast. The polypeptide is Small ribosomal subunit protein uS3c (rps3) (Saccharum hybrid (Sugarcane)).